We begin with the raw amino-acid sequence, 847 residues long: B-cell receptor CD22 (847 aa).

Residues 1-19 form the signal peptide; sequence MHLLGPWLLLLVLEYLAFC. Residues 20–138 enclose the Ig-like V-type domain; the sequence is DSSKWAFEHP…MERIHLNVSE (119 aa). The Extracellular portion of the chain corresponds to 20 to 687; sequence DSSKWAFEHP…YYSPETIGRR (668 aa). N-linked (GlcNAc...) asparagine glycans are attached at residues Asn67, Asn101, and Asn112. Arg120 provides a ligand contact to N-acetylneuraminate. 9 N-linked (GlcNAc...) asparagine glycosylation sites follow: Asn135, Asn164, Asn231, Asn295, Asn363, Asn428, Asn445, Asn448, and Asn479. 6 consecutive Ig-like C2-type domains span residues 143-235, 242-324, 331-416, 419-500, 505-582, and 593-676; these read PHIQ…DTVQ, PKLE…AEVF, PEPS…LDVQ, PKKV…VALN, PRDV…QTAS, and PRRL…STLN. The cysteines at positions 161 and 219 are disulfide-linked. Intrachain disulfides connect Cys265–Cys309 and Cys353–Cys396. 2 disulfides stabilise this stretch: Cys442/Cys484 and Cys529/Cys571. Asn574 and Asn634 each carry an N-linked (GlcNAc...) asparagine glycan. An intrachain disulfide couples Cys616 to Cys659. Residues 688–708 form a helical membrane-spanning segment; it reads VAVGLGSCLAILILAICGLKL. Topologically, residues 709–847 are cytoplasmic; that stretch reads QRRWKRTQSQ…ENVDYVILKH (139 aa). Phosphoserine occurs at positions 725, 726, and 729. 2 short sequence motifs (ITIM motif) span residues 760–765 and 794–799; these read ISYTTL and VTYSVL. Tyr762 is modified (phosphotyrosine). Phosphotyrosine occurs at positions 807, 822, and 842. 2 short sequence motifs (ITIM motif) span residues 820-825 and 840-845; these read IHYSEL and VDYVIL.

It belongs to the immunoglobulin superfamily. SIGLEC (sialic acid binding Ig-like lectin) family. In terms of assembly, predominantly monomer of isoform CD22-beta. Also found as heterodimer of isoform CD22-beta and a shorter isoform. Interacts with PTPN6/SHP-1, LYN, SYK, PIK3R1/PIK3R2 and PLCG1 upon phosphorylation. Interacts with GRB2, INPP5D and SHC1 upon phosphorylation. May form a complex with INPP5D/SHIP, GRB2 and SHC1. Phosphorylation of Tyr-762, Tyr-807 and Tyr-822 are involved in binding to SYK, GRB2 and SYK, respectively. Phosphorylation of Tyr-842 is involved in binding to SYK, PLCG2 and PIK3R1/PIK3R2. Post-translationally, phosphorylated on tyrosine residues by LYN.

The protein resides in the cell membrane. In terms of biological role, most highly expressed siglec (sialic acid-binding immunoglobulin-like lectin) on B-cells that plays a role in various aspects of B-cell biology including differentiation, antigen presentation, and trafficking to bone marrow. Binds to alpha 2,6-linked sialic acid residues of surface molecules such as CD22 itself, CD45 and IgM in a cis configuration. Can also bind to ligands on other cells as an adhesion molecule in a trans configuration. Acts as an inhibitory coreceptor on the surface of B-cells and inhibits B-cell receptor induced signaling, characterized by inhibition of the calcium mobilization and cellular activation. Mechanistically, the immunoreceptor tyrosine-based inhibitory motif domain is phosphorylated by the Src kinase LYN, which in turn leads to the recruitment of the protein tyrosine phosphatase 1/PTPN6, leading to the negative regulation of BCR signaling. If this negative signaling from is of sufficient strength, apoptosis of the B-cell can be induced. This Gorilla gorilla gorilla (Western lowland gorilla) protein is B-cell receptor CD22.